The primary structure comprises 284 residues: 2-dehydro-3-deoxyphosphooctonate aldolase (284 aa).

Belongs to the KdsA family.

The protein resides in the cytoplasm. The catalysed reaction is D-arabinose 5-phosphate + phosphoenolpyruvate + H2O = 3-deoxy-alpha-D-manno-2-octulosonate-8-phosphate + phosphate. The protein operates within carbohydrate biosynthesis; 3-deoxy-D-manno-octulosonate biosynthesis; 3-deoxy-D-manno-octulosonate from D-ribulose 5-phosphate: step 2/3. Its pathway is bacterial outer membrane biogenesis; lipopolysaccharide biosynthesis. The sequence is that of 2-dehydro-3-deoxyphosphooctonate aldolase from Salmonella paratyphi A (strain ATCC 9150 / SARB42).